The primary structure comprises 420 residues: uncharacterized protein (420 aa).

Positions 1 to 25 (MRYAMNKIPALLLVGALIIATVASG) are cleaved as a signal peptide. The residue at position 26 (Cys26) is an N-acetylcysteine. Residue Cys26 is the site of S-archaeol cysteine attachment.

This sequence belongs to the bacterial solute-binding protein 1 family.

Its subcellular location is the cell membrane. Probably part of a binding-protein-dependent transport system PH1036/38/39. This is an uncharacterized protein from Pyrococcus horikoshii (strain ATCC 700860 / DSM 12428 / JCM 9974 / NBRC 100139 / OT-3).